The following is an 867-amino-acid chain: Probable beta-glucosidase A (867 aa).

The first 18 residues, 1 to 18 (MRFSWLEVAVTAASLANA), serve as a signal peptide directing secretion. Asn67, Asn218, and Asn259 each carry an N-linked (GlcNAc...) asparagine glycan. The active site involves Asp287. Residues Asn322, Asn329, Asn361, Asn449, Asn530, Asn549, Asn571, Asn675, and Asn719 are each glycosylated (N-linked (GlcNAc...) asparagine).

It belongs to the glycosyl hydrolase 3 family.

It localises to the secreted. The enzyme catalyses Hydrolysis of terminal, non-reducing beta-D-glucosyl residues with release of beta-D-glucose.. It functions in the pathway glycan metabolism; cellulose degradation. Its function is as follows. Beta-glucosidases are one of a number of cellulolytic enzymes involved in the degradation of cellulosic biomass. Catalyzes the last step releasing glucose from the inhibitory cellobiose. This Aspergillus clavatus (strain ATCC 1007 / CBS 513.65 / DSM 816 / NCTC 3887 / NRRL 1 / QM 1276 / 107) protein is Probable beta-glucosidase A (bglA).